The following is a 177-amino-acid chain: MWTIMIGSKNRAKVHALQEVVIRDKIIVRSEAVPSDVASQPFSDQETIQGAINRANHCLSFDGVDYGVGLEGGVVRSEYGLFLCNWGALVSQTGDQWVAGGARVPLPQEVAHELEGGKELGDIMESLTKNPDVRMTDGAIGYLTDGEISRKAMFQHVVHLLIGQARRDGHLLRTVTH.

It belongs to the YjjX NTPase family. As to quaternary structure, homodimer. Mg(2+) is required as a cofactor. It depends on Mn(2+) as a cofactor.

The catalysed reaction is XTP + H2O = XDP + phosphate + H(+). The enzyme catalyses ITP + H2O = IDP + phosphate + H(+). Phosphatase that hydrolyzes non-canonical purine nucleotides such as XTP and ITP to their respective diphosphate derivatives. Probably excludes non-canonical purines from DNA/RNA precursor pool, thus preventing their incorporation into DNA/RNA and avoiding chromosomal lesions. The polypeptide is Probable inosine/xanthosine triphosphatase (Halalkalibacterium halodurans (strain ATCC BAA-125 / DSM 18197 / FERM 7344 / JCM 9153 / C-125) (Bacillus halodurans)).